A 1063-amino-acid chain; its full sequence is Structural polyprotein (1063 aa).

A disordered region spans residues 1–131 (MASTTPITME…LGPPTNPFQA (131 aa)). The segment at 30–69 (GASQSRRPRPPRQRDSSTSGDDSGRDSGGPRRRRGNRGRG) is human C1QBP/SF2P32-binding. S46 carries the phosphoserine; by host modification. Positions 59–69 (PRRRRGNRGRG) are enriched in basic residues. Basic and acidic residues predominate over residues 70–87 (QRRDWSRAPPPPEERQET). Residues 93-107 (APKPSRAPPQQPQPP) show a composition bias toward pro residues. The cysteines at positions 153 and 197 are disulfide-linked. The segment at 279–300 (GAPQAFLAGLLLATVAVGTARA) is functions as E2 signal peptide. The Extracellular segment spans residues 301-534 (GLQPRADMAA…LWLATANALS (234 aa)). N353, N371, N410, and N429 each carry an N-linked (GlcNAc...) asparagine; by host glycan. The helical transmembrane segment at 535 to 555 (LDHALAAFVLLVPWVLIFMVC) threads the bilayer. The Cytoplasmic portion of the chain corresponds to 556 to 582 (RRACRRRGAAAALTAVVLQGYNPPAYG). Residues 563 to 582 (GAAAALTAVVLQGYNPPAYG) are functions as E1 signal peptide. The Extracellular segment spans residues 583 to 1028 (EEAFTYLCTA…QTWAEWAAAH (446 aa)). 8 disulfides stabilise this stretch: C590/C595, C619/C824, C641/C653, C699/C712, C758/C767, C807/C817, C931/C934, and C950/C983. N-linked (GlcNAc...) asparagine; by host glycosylation is present at N658. Ca(2+) contacts are provided by N670 and A671. Ca(2+) contacts are provided by D718 and T719. N-linked (GlcNAc...) asparagine; by host glycans are attached at residues N759 and N791. O-linked (GalNAc...) threonine; by host glycans are attached at residues T1011 and T1012. The helical transmembrane segment at 1029–1049 (WWQLTLGAICALPLAGLLACC) threads the bilayer. The Extracellular portion of the chain corresponds to 1050–1063 (AKCLYYLRGAIAPR).

As to quaternary structure, homodimer; further assembles into homooligomer. Interacts with human C1QBP. Interacts (via N-terminus) with protease/methyltransferase p150. In terms of assembly, heterodimer with spike glycoprotein E2. Heterodimer with spike glycoprotein E1. Structural polyprotein: Specific enzymatic cleavages in vivo yield mature proteins. Two signal peptidase-mediated cleavages within the polyprotein produce the structural proteins capsid, E2, and E1. The E2 signal peptide remains attached to the C-terminus of the capsid protein after cleavage by the signal peptidase. Another signal peptide at E2 C-terminus directs E1 to the ER, with a similar mechanism. In terms of processing, contains three N-linked oligosaccharides. Post-translationally, capsid is phosphorylated on Ser-46 by host. This phosphorylation negatively regulates capsid protein RNA-binding activity. Dephosphorylated by human PP1A.

Its subcellular location is the virion. The protein localises to the host cytoplasm. It is found in the host mitochondrion. It localises to the virion membrane. The protein resides in the host Golgi apparatus membrane. Its function is as follows. Capsid protein interacts with genomic RNA and assembles into icosahedric core particles 65-70 nm in diameter. The resulting nucleocapsid eventually associates with the cytoplasmic domain of E2 at the cell membrane, leading to budding and formation of mature virions from host Golgi membranes. Phosphorylation negatively regulates RNA-binding activity, possibly delaying virion assembly during the viral replication phase. Capsid protein dimerizes and becomes disulfide-linked in the virion. Modulates genomic RNA replication. Modulates subgenomic RNA synthesis by interacting with human C1QBP/SF2P32. Induces both perinuclear clustering of mitochondria and the formation of electron-dense intermitochondrial plaques, both hallmarks of rubella virus infected cells. Induces apoptosis when expressed in transfected cells. Responsible for viral attachment to target host cell, by binding to the cell receptor. Its transport to the plasma membrane depends on interaction with E1 protein. The surface glycoproteins display an irregular helical organization and a pseudo-tetrameric inner nucleocapsid arrangement. In terms of biological role, class II viral fusion protein. Fusion activity is inactive as long as E1 is bound to E2 in mature virion. After virus attachment to target cell and clathrin-mediated endocytosis, acidification of the endosome would induce dissociation of E1/E2 heterodimer and concomitant trimerization of the E1 subunits. This E1 homotrimer is fusion active, and promotes release of viral nucleocapsid in cytoplasm after endosome and viral membrane fusion. The cytoplasmic tail of spike glycoprotein E1 modulates virus release. The surface glycoproteins display an irregular helical organization and a pseudo-tetrameric inner nucleocapsid arrangement. The sequence is that of Structural polyprotein from Rubella virus (strain Therien) (RUBV).